A 1228-amino-acid polypeptide reads, in one-letter code: Membrane-anchored lipid-binding protein LAM1 (1228 aa).

Residues 1–1062 (MHEHKAELRL…IFKCFSKVNK (1062 aa)) are Cytoplasmic-facing. The PH domain maps to 308–421 (EKGLSGWLYM…WINTLTSHKR (114 aa)). One can recognise a VASt domain in the interval 773 to 978 (EAWCYFQDNF…KTREYLKKFN (206 aa)). Residues 1063–1083 (TLYYCLLISAVTNLFFVGKSI) traverse the membrane as a helical segment. Over 1084–1228 (HSYFSVKSAE…EYNRLSAIPV (145 aa)) the chain is Lumenal. N1205 carries an N-linked (GlcNAc...) asparagine glycan.

This sequence belongs to the SIP3 family.

It is found in the mitochondrion membrane. Its subcellular location is the endoplasmic reticulum membrane. Functionally, involved in mitochondrial fragmentation during programmed cell death in response to high levels of alpha-factor mating pheromone or the drug amiodarone. May be involved in sterol transfer between intracellular membranes. This is Membrane-anchored lipid-binding protein LAM1 from Saccharomyces cerevisiae (strain ATCC 204508 / S288c) (Baker's yeast).